Reading from the N-terminus, the 323-residue chain is L-lactate dehydrogenase (323 aa).

The NAD(+) site is built by V11, D32, and Y63. Substrate-binding residues include Q80 and R86. Residues S99, V116–N118, and S141 each bind NAD(+). Position 118–121 (N118–D121) interacts with substrate. D146–R149 is a binding site for substrate. Beta-D-fructose 1,6-bisphosphate-binding residues include R151 and H166. H173 functions as the Proton acceptor in the catalytic mechanism. At Y221 the chain carries Phosphotyrosine. T230 is a substrate binding site.

This sequence belongs to the LDH/MDH superfamily. LDH family. In terms of assembly, homotetramer.

The protein resides in the cytoplasm. The enzyme catalyses (S)-lactate + NAD(+) = pyruvate + NADH + H(+). Its pathway is fermentation; pyruvate fermentation to lactate; (S)-lactate from pyruvate: step 1/1. Its activity is regulated as follows. Allosterically activated by fructose 1,6-bisphosphate (FBP). Functionally, catalyzes the conversion of lactate to pyruvate. This Kosmotoga olearia (strain ATCC BAA-1733 / DSM 21960 / TBF 19.5.1) protein is L-lactate dehydrogenase.